The chain runs to 127 residues: EF-hand calcium-binding domain-containing protein 10 (127 aa).

The EF-hand domain maps to 63-98; the sequence is MDNSNIVAMFEMMDSSGRGTISFVQYKEALKTLGLC.

The chain is EF-hand calcium-binding domain-containing protein 10 (EFCAB10) from Homo sapiens (Human).